Here is a 1866-residue protein sequence, read N- to C-terminus: Nucleoporin Nup188 (1866 aa).

It belongs to the Nup188 family. As to quaternary structure, part of the nuclear pore complex (NPC).

It is found in the nucleus. The protein resides in the nuclear pore complex. Component of the nuclear pore complex (NPC), a complex required for the trafficking across the nuclear envelope. Required for proper protein transport into the nucleus. The protein is Nucleoporin Nup188 of Drosophila melanogaster (Fruit fly).